The following is a 212-amino-acid chain: Ribosomal RNA small subunit methyltransferase G (212 aa).

S-adenosyl-L-methionine-binding positions include Gly80, Leu85, 131 to 132 (AE), and Arg146.

Belongs to the methyltransferase superfamily. RNA methyltransferase RsmG family.

The protein resides in the cytoplasm. It carries out the reaction guanosine(527) in 16S rRNA + S-adenosyl-L-methionine = N(7)-methylguanosine(527) in 16S rRNA + S-adenosyl-L-homocysteine. Its function is as follows. Specifically methylates the N7 position of guanine in position 527 of 16S rRNA. The protein is Ribosomal RNA small subunit methyltransferase G of Xanthomonas campestris pv. campestris (strain 8004).